The sequence spans 285 residues: Bifunctional protein FolD (285 aa).

NADP(+) is bound by residues 165 to 167 (GRS) and S190.

It belongs to the tetrahydrofolate dehydrogenase/cyclohydrolase family. In terms of assembly, homodimer.

The catalysed reaction is (6R)-5,10-methylene-5,6,7,8-tetrahydrofolate + NADP(+) = (6R)-5,10-methenyltetrahydrofolate + NADPH. The enzyme catalyses (6R)-5,10-methenyltetrahydrofolate + H2O = (6R)-10-formyltetrahydrofolate + H(+). The protein operates within one-carbon metabolism; tetrahydrofolate interconversion. Functionally, catalyzes the oxidation of 5,10-methylenetetrahydrofolate to 5,10-methenyltetrahydrofolate and then the hydrolysis of 5,10-methenyltetrahydrofolate to 10-formyltetrahydrofolate. The polypeptide is Bifunctional protein FolD (Burkholderia cenocepacia (strain HI2424)).